Here is a 208-residue protein sequence, read N- to C-terminus: Large ribosomal subunit protein uL4 (208 aa).

Residues 54–78 (RAEVSHTTKKPWNQKGTGRARAGMS) are disordered.

Belongs to the universal ribosomal protein uL4 family. Part of the 50S ribosomal subunit.

Its function is as follows. One of the primary rRNA binding proteins, this protein initially binds near the 5'-end of the 23S rRNA. It is important during the early stages of 50S assembly. It makes multiple contacts with different domains of the 23S rRNA in the assembled 50S subunit and ribosome. Forms part of the polypeptide exit tunnel. The polypeptide is Large ribosomal subunit protein uL4 (Methylobacillus flagellatus (strain ATCC 51484 / DSM 6875 / VKM B-1610 / KT)).